A 440-amino-acid polypeptide reads, in one-letter code: tRNA(Ile)-lysidine synthase (440 aa).

31–36 (SGGADS) provides a ligand contact to ATP.

It belongs to the tRNA(Ile)-lysidine synthase family.

It is found in the cytoplasm. It catalyses the reaction cytidine(34) in tRNA(Ile2) + L-lysine + ATP = lysidine(34) in tRNA(Ile2) + AMP + diphosphate + H(+). Its function is as follows. Ligates lysine onto the cytidine present at position 34 of the AUA codon-specific tRNA(Ile) that contains the anticodon CAU, in an ATP-dependent manner. Cytidine is converted to lysidine, thus changing the amino acid specificity of the tRNA from methionine to isoleucine. The chain is tRNA(Ile)-lysidine synthase from Borrelia garinii subsp. bavariensis (strain ATCC BAA-2496 / DSM 23469 / PBi) (Borreliella bavariensis).